The primary structure comprises 114 residues: Fumarate reductase subunit D (114 aa).

Helical transmembrane passes span 27–47 (ICFP…LVPV), 50–70 (IVAF…TIFP), and 94–114 (WVFY…VIAL).

It belongs to the FrdD family. Part of an enzyme complex containing four subunits: a flavoprotein (FrdA), an iron-sulfur protein (FrdB), and two hydrophobic anchor proteins (FrdC and FrdD).

Its subcellular location is the cell inner membrane. In terms of biological role, anchors the catalytic components of the fumarate reductase complex to the cell membrane, binds quinones. This Actinobacillus pleuropneumoniae serotype 3 (strain JL03) protein is Fumarate reductase subunit D.